Reading from the N-terminus, the 180-residue chain is ATP-dependent protease subunit HslV (180 aa).

Threonine 7 is a catalytic residue. Glycine 165, cysteine 168, and threonine 171 together coordinate Na(+).

Belongs to the peptidase T1B family. HslV subfamily. A double ring-shaped homohexamer of HslV is capped on each side by a ring-shaped HslU homohexamer. The assembly of the HslU/HslV complex is dependent on binding of ATP.

It localises to the cytoplasm. It catalyses the reaction ATP-dependent cleavage of peptide bonds with broad specificity.. With respect to regulation, allosterically activated by HslU binding. Its function is as follows. Protease subunit of a proteasome-like degradation complex believed to be a general protein degrading machinery. The polypeptide is ATP-dependent protease subunit HslV (Bacillus cereus (strain ATCC 10987 / NRS 248)).